The following is a 317-amino-acid chain: Methionyl-tRNA formyltransferase (317 aa).

S112 to P115 contributes to the (6S)-5,6,7,8-tetrahydrofolate binding site.

Belongs to the Fmt family.

The enzyme catalyses L-methionyl-tRNA(fMet) + (6R)-10-formyltetrahydrofolate = N-formyl-L-methionyl-tRNA(fMet) + (6S)-5,6,7,8-tetrahydrofolate + H(+). Functionally, attaches a formyl group to the free amino group of methionyl-tRNA(fMet). The formyl group appears to play a dual role in the initiator identity of N-formylmethionyl-tRNA by promoting its recognition by IF2 and preventing the misappropriation of this tRNA by the elongation apparatus. The sequence is that of Methionyl-tRNA formyltransferase from Mannheimia succiniciproducens (strain KCTC 0769BP / MBEL55E).